A 293-amino-acid chain; its full sequence is Acetylglutamate kinase (293 aa).

Substrate-binding positions include 68–69, Arg90, and Asn189; that span reads GG.

This sequence belongs to the acetylglutamate kinase family. ArgB subfamily.

Its subcellular location is the cytoplasm. The catalysed reaction is N-acetyl-L-glutamate + ATP = N-acetyl-L-glutamyl 5-phosphate + ADP. It participates in amino-acid biosynthesis; L-arginine biosynthesis; N(2)-acetyl-L-ornithine from L-glutamate: step 2/4. Its function is as follows. Catalyzes the ATP-dependent phosphorylation of N-acetyl-L-glutamate. The polypeptide is Acetylglutamate kinase (Mycolicibacterium smegmatis (strain ATCC 700084 / mc(2)155) (Mycobacterium smegmatis)).